Here is a 152-residue protein sequence, read N- to C-terminus: D-aminoacyl-tRNA deacylase (152 aa).

The Gly-cisPro motif, important for rejection of L-amino acids signature appears at 137–138 (GP).

Belongs to the DTD family. As to quaternary structure, homodimer.

The protein resides in the cytoplasm. It carries out the reaction glycyl-tRNA(Ala) + H2O = tRNA(Ala) + glycine + H(+). The enzyme catalyses a D-aminoacyl-tRNA + H2O = a tRNA + a D-alpha-amino acid + H(+). An aminoacyl-tRNA editing enzyme that deacylates mischarged D-aminoacyl-tRNAs. Also deacylates mischarged glycyl-tRNA(Ala), protecting cells against glycine mischarging by AlaRS. Acts via tRNA-based rather than protein-based catalysis; rejects L-amino acids rather than detecting D-amino acids in the active site. By recycling D-aminoacyl-tRNA to D-amino acids and free tRNA molecules, this enzyme counteracts the toxicity associated with the formation of D-aminoacyl-tRNA entities in vivo and helps enforce protein L-homochirality. The sequence is that of D-aminoacyl-tRNA deacylase from Geobacter sulfurreducens (strain ATCC 51573 / DSM 12127 / PCA).